Here is a 130-residue protein sequence, read N- to C-terminus: Small ribosomal subunit protein uS9 (130 aa).

The protein belongs to the universal ribosomal protein uS9 family.

This Cupriavidus necator (strain ATCC 17699 / DSM 428 / KCTC 22496 / NCIMB 10442 / H16 / Stanier 337) (Ralstonia eutropha) protein is Small ribosomal subunit protein uS9.